Consider the following 397-residue polypeptide: (S)-8-oxocitronellyl enol synthase ISY2 (397 aa).

NADP(+) is bound by residues 36–38 (TGL), 64–65 (RR), 82–83 (DV), 106–107 (TW), Gln-144, Tyr-180, Ile-207, and 214–216 (SMM). The active site involves Tyr-180.

This sequence belongs to the short-chain dehydrogenases/reductases (SDR) family.

The catalysed reaction is (S)-8-oxocitronellyl enol + NADP(+) = (6E)-8-oxogeranial + NADPH + H(+). The enzyme catalyses (S)-8-oxocitronellyl enol + NAD(+) = (6E)-8-oxogeranial + NADH + H(+). Its function is as follows. Iridoid synthase that catalyzes the first step in generation of the iridoid ring scaffold using the linear monoterpene (6E)-8-oxogeranial as substrate. Iridoids comprise a large family of distinctive bicyclic monoterpenes that possess a wide range of pharmacological activities, including anticancer, anti-inflammatory, antifungal and antibacterial activities. Catalyzes the conversion of the linear monoterpene (6E)-8-oxogeranial to (S)-8-oxocitronellyl enol, a precursor of nepetalactones, which are metabolites that are both insect-repellent and have euphoric effect in cats. The polypeptide is (S)-8-oxocitronellyl enol synthase ISY2 (Nepeta cataria (Catnip)).